We begin with the raw amino-acid sequence, 333 residues long: Probable xyloglucan endotransglucosylase/hydrolase protein 27 (333 aa).

Positions 1–20 (METLSRLLVFMSLFSGLVSG) are cleaved as a signal peptide. In terms of domain architecture, GH16 spans 21-223 (FALQNLPITS…YKYAPYIARF (203 aa)). The active-site Nucleophile is the Glu108. Residue Glu112 is the Proton donor of the active site. Xyloglucan contacts are provided by residues Glu112 and 125 to 127 (QTN). Residue Asn131 is glycosylated (N-linked (GlcNAc...) asparagine). Xyloglucan is bound by residues 135 to 139 (HSGRE), 202 to 203 (KW), Gly207, and Arg282. Cys277 and Cys290 are disulfide-bonded. The segment at 311–333 (IPRRHRNGKHRSKRSRVDGTESI) is disordered. The span at 312–324 (PRRHRNGKHRSKR) shows a compositional bias: basic residues.

Belongs to the glycosyl hydrolase 16 family. XTH group 3 subfamily. Post-translationally, contains at least one intrachain disulfide bond essential for its enzymatic activity. Expressed in 7 day old seedlings, roots, hypocotyls, rosette leaves, internodes between nodes bearing axillary shoots, nodes bearing flowers, flower buds, anthers and siliques.

It localises to the secreted. It is found in the cell wall. Its subcellular location is the extracellular space. The protein localises to the apoplast. The enzyme catalyses breaks a beta-(1-&gt;4) bond in the backbone of a xyloglucan and transfers the xyloglucanyl segment on to O-4 of the non-reducing terminal glucose residue of an acceptor, which can be a xyloglucan or an oligosaccharide of xyloglucan.. In terms of biological role, catalyzes xyloglucan endohydrolysis (XEH) and/or endotransglycosylation (XET). Cleaves and religates xyloglucan polymers, an essential constituent of the primary cell wall, and thereby participates in cell wall construction of growing tissues. Required for cell wall modification during the development of tracheary elements. The protein is Probable xyloglucan endotransglucosylase/hydrolase protein 27 (XTH27) of Arabidopsis thaliana (Mouse-ear cress).